A 449-amino-acid polypeptide reads, in one-letter code: Glutamyl-tRNA reductase (449 aa).

Substrate-binding positions include 49-52, S107, 112-114, and Q118; these read TCNR and EPQ. C50 functions as the Nucleophile in the catalytic mechanism. 187 to 192 serves as a coordination point for NADP(+); the sequence is GAGETI. The segment at 418–449 is disordered; it reads QLVERSSEGDDSQQAGADGGAARGDRRAAGGS. Residues 440–449 are compositionally biased toward basic and acidic residues; the sequence is RGDRRAAGGS.

The protein belongs to the glutamyl-tRNA reductase family. In terms of assembly, homodimer.

The catalysed reaction is (S)-4-amino-5-oxopentanoate + tRNA(Glu) + NADP(+) = L-glutamyl-tRNA(Glu) + NADPH + H(+). It functions in the pathway porphyrin-containing compound metabolism; protoporphyrin-IX biosynthesis; 5-aminolevulinate from L-glutamyl-tRNA(Glu): step 1/2. Catalyzes the NADPH-dependent reduction of glutamyl-tRNA(Glu) to glutamate 1-semialdehyde (GSA). The polypeptide is Glutamyl-tRNA reductase (Halorhodospira halophila (strain DSM 244 / SL1) (Ectothiorhodospira halophila (strain DSM 244 / SL1))).